We begin with the raw amino-acid sequence, 351 residues long: Photosystem II D2 protein (351 aa).

A helical membrane pass occupies residues 39-59 (CAFLALGGWLTGTTFVTSWYT). Histidine 116 serves as a coordination point for chlorophyll a. Residues 123–139 (GFMLRQFEIARLVGIRP) traverse the membrane as a helical segment. Glutamine 128 and asparagine 141 together coordinate pheophytin a. The chain crosses the membrane as a helical span at residues 151-164 (VFVSVFLMYPLGQS). Histidine 196 provides a ligand contact to chlorophyll a. Residues 206-226 (GALLCAIHGATVENTLFEDGE) form a helical membrane-spanning segment. A plastoquinone contacts are provided by histidine 213 and phenylalanine 260. Fe cation is bound at residue histidine 213. Histidine 267 is a binding site for Fe cation. Residues 277–293 (GLWMSAVGIVGLALNLR) traverse the membrane as a helical segment.

It belongs to the reaction center PufL/M/PsbA/D family. PSII is composed of 1 copy each of membrane proteins PsbA, PsbB, PsbC, PsbD, PsbE, PsbF, PsbH, PsbI, PsbJ, PsbK, PsbL, PsbM, PsbT, PsbX, PsbY, PsbZ, Psb30/Ycf12, peripheral proteins PsbO, CyanoQ (PsbQ), PsbU, PsbV and a large number of cofactors. It forms dimeric complexes. The cofactor is The D1/D2 heterodimer binds P680, chlorophylls that are the primary electron donor of PSII, and subsequent electron acceptors. It shares a non-heme iron and each subunit binds pheophytin, quinone, additional chlorophylls, carotenoids and lipids. There is also a Cl(-1) ion associated with D1 and D2, which is required for oxygen evolution. The PSII complex binds additional chlorophylls, carotenoids and specific lipids..

It is found in the cellular thylakoid membrane. The catalysed reaction is 2 a plastoquinone + 4 hnu + 2 H2O = 2 a plastoquinol + O2. Its function is as follows. Photosystem II (PSII) is a light-driven water:plastoquinone oxidoreductase that uses light energy to abstract electrons from H(2)O, generating O(2) and a proton gradient subsequently used for ATP formation. It consists of a core antenna complex that captures photons, and an electron transfer chain that converts photonic excitation into a charge separation. The D1/D2 (PsbA/PsbD) reaction center heterodimer binds P680, the primary electron donor of PSII as well as several subsequent electron acceptors. D2 is needed for assembly of a stable PSII complex. The chain is Photosystem II D2 protein from Trichormus variabilis (strain ATCC 29413 / PCC 7937) (Anabaena variabilis).